A 237-amino-acid chain; its full sequence is NAD-dependent protein deacylase (237 aa).

Residues 1–235 (MRVVVLSGAG…PGLLQRLPAL (235 aa)) enclose the Deacetylase sirtuin-type domain. 8–28 (GAGISAESDVPTFRDDKNGLW) is a binding site for NAD(+). 2 residues coordinate substrate: Tyr53 and Arg56. 86-89 (QNVD) provides a ligand contact to NAD(+). The Proton acceptor role is filled by His104. The Zn(2+) site is built by Cys112, Cys115, Cys138, and Cys140. NAD(+) is bound by residues 177–179 (GTS), 203–205 (NPE), and Ala221.

Belongs to the sirtuin family. Class III subfamily. Zn(2+) is required as a cofactor.

The protein localises to the cytoplasm. It catalyses the reaction N(6)-acetyl-L-lysyl-[protein] + NAD(+) + H2O = 2''-O-acetyl-ADP-D-ribose + nicotinamide + L-lysyl-[protein]. The enzyme catalyses N(6)-succinyl-L-lysyl-[protein] + NAD(+) + H2O = 2''-O-succinyl-ADP-D-ribose + nicotinamide + L-lysyl-[protein]. In terms of biological role, NAD-dependent lysine deacetylase and desuccinylase that specifically removes acetyl and succinyl groups on target proteins. Modulates the activities of several proteins which are inactive in their acylated form. This Mycobacterium leprae (strain TN) protein is NAD-dependent protein deacylase.